The primary structure comprises 1217 residues: Valine--tRNA ligase (1217 aa).

The region spanning 27-155 (NAKQQSQVWQ…ISLCEKMVPV (129 aa)) is the GST C-terminal domain. Positions 293–303 (PNVTGSLHLGH) match the 'HIGH' region motif. The short motif at 809–813 (KMSKS) is the 'KMSKS' region element. An ATP-binding site is contributed by lysine 812.

The protein belongs to the class-I aminoacyl-tRNA synthetase family.

The catalysed reaction is tRNA(Val) + L-valine + ATP = L-valyl-tRNA(Val) + AMP + diphosphate. This is Valine--tRNA ligase (vars1) from Takifugu rubripes (Japanese pufferfish).